The sequence spans 258 residues: MLSRRIIPCLDVRDGRVVKGVRFRDHVDMGDIAELAQRYRDQGADELVFYDIGASPEARSVDVAWIERIARLIDIPFCVAGGIDSVETARRVLFAGADKVSINSPALGRPELITELADEFGVQCVVVGVDSVRETDGQWRVRRFSGDPDKTQAVPLRTLDWIVEAQRRGAGEIVLNCMDSDGVRRGYDVVQLQQARALCQVPLIASGGAGAMEHFAEAFDQADVDGALAASVFHSGAIAIPELKRYLRGQQIEVRDVY.

Catalysis depends on residues Asp11 and Asp130.

It belongs to the HisA/HisF family. Heterodimer of HisH and HisF.

It localises to the cytoplasm. It carries out the reaction 5-[(5-phospho-1-deoxy-D-ribulos-1-ylimino)methylamino]-1-(5-phospho-beta-D-ribosyl)imidazole-4-carboxamide + L-glutamine = D-erythro-1-(imidazol-4-yl)glycerol 3-phosphate + 5-amino-1-(5-phospho-beta-D-ribosyl)imidazole-4-carboxamide + L-glutamate + H(+). The protein operates within amino-acid biosynthesis; L-histidine biosynthesis; L-histidine from 5-phospho-alpha-D-ribose 1-diphosphate: step 5/9. Its function is as follows. IGPS catalyzes the conversion of PRFAR and glutamine to IGP, AICAR and glutamate. The HisF subunit catalyzes the cyclization activity that produces IGP and AICAR from PRFAR using the ammonia provided by the HisH subunit. This chain is Imidazole glycerol phosphate synthase subunit HisF, found in Stenotrophomonas maltophilia (strain K279a).